The primary structure comprises 670 residues: Transcription factor vib-1 (670 aa).

The segment at residues 106-341 (TEMVQDLRDD…RSPRNFQARK (236 aa)) is a DNA-binding region (NDT80). Polar residues-rich tracts occupy residues 394 to 438 (FTSA…TTSM) and 553 to 568 (LGNS…QHHP). Disordered regions lie at residues 394–457 (FTSA…SYTA) and 496–670 (SAPP…WNAT). Residues 592 to 605 (ASAPASAPTSAAPP) show a composition bias toward low complexity. The span at 611–631 (PSQSWTSTAGEGQTSSYTNGG) shows a compositional bias: polar residues.

It localises to the nucleus. Its subcellular location is the cytoplasm. Functionally, transcription factor that acts as a positive regulator of nonrepressible acid phosphatase activity. Is a major regulator of responses to nitrogen and carbon starvation and is essential for the expression of genes involved in vegetative incompatibility (like pin-c, het-6, and tol). Vegetative incompatibility is a non-self-recognition system ubiquitous in filamentous fungi which results in programmed cell death. This Neurospora crassa (strain ATCC 24698 / 74-OR23-1A / CBS 708.71 / DSM 1257 / FGSC 987) protein is Transcription factor vib-1 (vib-1).